The sequence spans 317 residues: MIMRFGYVSHAMALWDCSPAKTITFTSFQKLSKQEREDKLYDVTKQNLEHTIRILHYNIAHEIPLYRLSSSIVPLATHPEVEFDYIGAFTPLWRKIGALIKEHNLRVSFHPNQFTLFTSDKPHITTNAITDMTYHYKVLDAIGIADSSYINIHVGGAYGNKEKAIERFHENIKKLPAHIKKQMTLENDDKTYTTAETLSICQKEKIPFVFDYHHHMANLCEEPLEELLPAIFETWSHTNIVPKVHISSPKSKKEFRAHAEYIDLEFIKPFLHVAKKINHNFDIMIESKQKDLAMLQFIQELSSIRGIKRISSSTLQW.

This sequence belongs to the uve1/UvsE family.

Its function is as follows. Component in a DNA repair pathway. Removal of UV LIGHT damaged nucleotides. Recognizes pyrimidine dimers and cleave a phosphodiester bond immediately 5' to the lesion. The chain is UV DNA damage endonuclease from Bacillus cereus (strain 03BB102).